Reading from the N-terminus, the 274-residue chain is Octanoyltransferase LipM (274 aa).

The BPL/LPL catalytic domain maps to 32–244 (GEVPPTLRFY…GFARALGLTL (213 aa)). The Acyl-thioester intermediate role is filled by C146.

This sequence belongs to the octanoyltransferase LipM family. In terms of assembly, monomer.

The catalysed reaction is octanoyl-[ACP] + L-lysyl-[protein] = N(6)-octanoyl-L-lysyl-[protein] + holo-[ACP] + H(+). The protein operates within protein modification; protein lipoylation via endogenous pathway; protein N(6)-(lipoyl)lysine from octanoyl-[acyl-carrier-protein]. Catalyzes the transfer of endogenously produced octanoic acid from octanoyl-acyl-carrier-protein onto the lipoyl domain of GcvH, an intermediate carrier during protein lipoylation. The protein is Octanoyltransferase LipM of Symbiobacterium thermophilum (strain DSM 24528 / JCM 14929 / IAM 14863 / T).